A 252-amino-acid polypeptide reads, in one-letter code: Probable transcriptional regulatory protein Kole_1935 (252 aa).

It belongs to the TACO1 family.

It is found in the cytoplasm. The polypeptide is Probable transcriptional regulatory protein Kole_1935 (Kosmotoga olearia (strain ATCC BAA-1733 / DSM 21960 / TBF 19.5.1)).